The following is a 785-amino-acid chain: Ubiquitin carboxyl-terminal hydrolase 1 (785 aa).

Disordered regions lie at residues 1-21 (MPGV…SKKN) and 33-52 (TKRA…ASEY). The segment covering 7–16 (SESNGLSRGS) has biased composition (polar residues). Residues Ser-16, Ser-42, and Ser-67 each carry the phosphoserine modification. A USP domain is found at 81–785 (VGLNNLGNTC…TPYLLFYKKL (705 aa)). Cys-90 acts as the Nucleophile in catalysis. Basic and acidic residues-rich tracts occupy residues 258–275 (EDFK…KSDT) and 286–298 (LSKE…ENQR). The tract at residues 258 to 336 (EDFKEKLPKG…SPRPSQKKSR (79 aa)) is disordered. A phosphoserine mark is found at Ser-313 and Ser-475. His-593 serves as the catalytic Proton acceptor. Residues 693–723 (TAFAENRNSETSDTTGTHESDRNKESSDQTG) form a disordered region. The segment covering 708 to 719 (GTHESDRNKESS) has biased composition (basic and acidic residues). Phosphoserine is present on Ser-768.

It belongs to the peptidase C19 family. As to quaternary structure, interacts with FANCD2 and PCNA. Interacts with WDR48. Interacts with ATAD5; the interaction regulates USP1-mediated PCNA deubiquitination. Autocatalytic cleavage of USP1 following UV irradiation inactivates it, leading to an increase in ubiquitinated PCNA, recruitment of POLH and translesion synthesis. In terms of processing, ubiquitinated by the CRL2(KLHDC2) complex following autocatalytic cleavage, leading to its degradation: the CRL2(KLHDC2) complex recognizes the diglycine (Gly-Gly) at the C-terminus.

Its subcellular location is the nucleus. It catalyses the reaction Thiol-dependent hydrolysis of ester, thioester, amide, peptide and isopeptide bonds formed by the C-terminal Gly of ubiquitin (a 76-residue protein attached to proteins as an intracellular targeting signal).. Functionally, negative regulator of DNA damage repair which specifically deubiquitinates monoubiquitinated FANCD2. Also involved in PCNA-mediated translesion synthesis (TLS) by deubiquitinating monoubiquitinated PCNA. Has almost no deubiquitinating activity by itself and requires the interaction with WDR48 to have a high activity. The polypeptide is Ubiquitin carboxyl-terminal hydrolase 1 (USP1) (Homo sapiens (Human)).